A 295-amino-acid polypeptide reads, in one-letter code: Tyrosine recombinase XerC (295 aa).

Positions 1–85 constitute a Core-binding (CB) domain; the sequence is MLTALNRYWD…ALRRFLSFLV (85 aa). Residues 106 to 285 form the Tyr recombinase domain; the sequence is HLPKNMDGEQ…NFQHLAEVYD (180 aa). Catalysis depends on residues Arg145, Lys169, His237, Arg240, and His263. Catalysis depends on Tyr272, which acts as the O-(3'-phospho-DNA)-tyrosine intermediate.

This sequence belongs to the 'phage' integrase family. XerC subfamily. In terms of assembly, forms a cyclic heterotetrameric complex composed of two molecules of XerC and two molecules of XerD.

The protein localises to the cytoplasm. In terms of biological role, site-specific tyrosine recombinase, which acts by catalyzing the cutting and rejoining of the recombining DNA molecules. The XerC-XerD complex is essential to convert dimers of the bacterial chromosome into monomers to permit their segregation at cell division. It also contributes to the segregational stability of plasmids. The protein is Tyrosine recombinase XerC of Haemophilus influenzae (strain PittEE).